Reading from the N-terminus, the 155-residue chain is DNA gyrase inhibitor (155 aa).

The protein belongs to the DNA gyrase inhibitor family. In terms of assembly, interacts with DNA gyrase.

The protein localises to the cytoplasm. Inhibits the supercoiling activity of DNA gyrase. Acts by inhibiting DNA gyrase at an early step, prior to (or at the step of) binding of DNA by the gyrase. It protects cells against toxins that target DNA gyrase, by inhibiting activity of these toxins and reducing the formation of lethal double-strand breaks in the cell. This Edwardsiella piscicida protein is DNA gyrase inhibitor.